We begin with the raw amino-acid sequence, 366 residues long: Prostaglandin F2-alpha receptor (366 aa).

Topologically, residues 1–31 are extracellular; the sequence is MSINSSKQPASSAAGLIANTTCQTENRLSVF. N4 and N19 each carry an N-linked (GlcNAc...) asparagine glycan. The chain crosses the membrane as a helical span at residues 32–55; the sequence is FSIIFMTVGIVSNSLAIAILMKAY. Residues 56–69 lie on the Cytoplasmic side of the membrane; the sequence is QRFRRKSKASFLLL. Residues 70–90 traverse the membrane as a helical segment; the sequence is ASGLVITDFFGHLINGGIAVF. Residues 91–109 are Extracellular-facing; that stretch reads VYASDKDWIRFDQSNILCS. C108 and C186 form a disulfide bridge. A helical transmembrane segment spans residues 110–131; sequence VFGISMVFSGLCPLFLGSTMAI. Residues 132–152 lie on the Cytoplasmic side of the membrane; it reads ERCIGVTNPLFHSTKITSKHV. A helical membrane pass occupies residues 153 to 175; that stretch reads KMILSGVCMFAVFVALLPILGHR. At 176-198 the chain is on the extracellular side; that stretch reads DYQIQASRTWCFYNTEHIEDWED. Residues 199 to 224 traverse the membrane as a helical segment; the sequence is RFYLLFFSSLGLLALGISFSCNAVTG. The Cytoplasmic portion of the chain corresponds to 225–250; sequence VTLLRVKFRSQQHRQGRSHHLEMVIQ. The chain crosses the membrane as a helical span at residues 251-267; it reads LLAIMCVSCVCWSPFLV. The Extracellular segment spans residues 268–285; sequence TMANIAINGNNSPVTCET. The chain crosses the membrane as a helical span at residues 286–307; the sequence is TLFALRMATWNQILDPWVYILL. Residues 308–366 are Cytoplasmic-facing; it reads RKAVLRNLYKLASRCCGVNIISLHIWELSSIKNSLKVAAISESPAAEKENQQASSEAGL.

The protein belongs to the G-protein coupled receptor 1 family. Highest expression in pregnant ovary. Also found in a low extent in the kidney. In the brain, expressed in astrocytes and oligodendrocytes, and meningeal fibroblasts, but not in migroglia cells.

The protein resides in the cell membrane. In terms of biological role, receptor for prostaglandin F2-alpha (PGF2-alpha). The activity of this receptor is mediated by G proteins which activate a phosphatidylinositol-calcium second messenger system. Initiates luteolysis in the corpus luteum. The protein is Prostaglandin F2-alpha receptor (Ptgfr) of Rattus norvegicus (Rat).